The following is a 57-amino-acid chain: Potassium channel toxin alpha-KTx 1.5 (57 aa).

The N-terminal stretch at 1–20 is a signal peptide; the sequence is MKISFLLLALVICSIGWSEA. Gln-21 is modified (pyrrolidone carboxylic acid). 3 cysteine pairs are disulfide-bonded: Cys-27/Cys-48, Cys-33/Cys-53, and Cys-37/Cys-55.

This sequence belongs to the short scorpion toxin superfamily. Potassium channel inhibitor family. Alpha-KTx 01 subfamily. Expressed by the venom gland.

It is found in the secreted. In terms of biological role, potent blocker of both large-conductance calcium-activated potassium channels (KCa1.1/KCNMA1) and voltage-gated potassium channels (Kv1.3/KCNA3). Has also been shown to moderately inhibit Kv1.2/KCNA2 and weakly inhibit Kv1.1/KCNA1 channels, as well as 5-hydroxytryptamine 3 receptors (HTR3A). The protein is Potassium channel toxin alpha-KTx 1.5 of Olivierus martensii (Manchurian scorpion).